The following is a 62-amino-acid chain: UPF0434 protein Tola_2233 (62 aa).

It belongs to the UPF0434 family.

The chain is UPF0434 protein Tola_2233 from Tolumonas auensis (strain DSM 9187 / NBRC 110442 / TA 4).